A 628-amino-acid polypeptide reads, in one-letter code: 1,4-alpha-glucan branching enzyme GlgB (628 aa).

The active-site Nucleophile is Asp304. The active-site Proton donor is Glu355.

The protein belongs to the glycosyl hydrolase 13 family. GlgB subfamily. In terms of assembly, monomer.

It carries out the reaction Transfers a segment of a (1-&gt;4)-alpha-D-glucan chain to a primary hydroxy group in a similar glucan chain.. Its pathway is glycan biosynthesis; glycogen biosynthesis. Catalyzes the formation of the alpha-1,6-glucosidic linkages in glycogen by scission of a 1,4-alpha-linked oligosaccharide from growing alpha-1,4-glucan chains and the subsequent attachment of the oligosaccharide to the alpha-1,6 position. The chain is 1,4-alpha-glucan branching enzyme GlgB from Streptococcus mutans serotype c (strain ATCC 700610 / UA159).